A 382-amino-acid polypeptide reads, in one-letter code: Ferredoxin--NADP reductase, root isozyme 2, chloroplastic (382 aa).

A chloroplast-targeting transit peptide spans 1 to 64 (MSHSAVSQAG…DGKRYPSTTI (64 aa)). Residues 97 to 225 (KESYTAKIVS…TGPSGKVMLL (129 aa)) form the FAD-binding FR-type domain. A disulfide bond links C200 and C205. The residue at position 201 (S201) is a Phosphoserine. T233 carries the post-translational modification Phosphothreonine. 235-253 (IMIATGTGVAPYRGYLRRM) contacts NADP(+).

Belongs to the ferredoxin--NADP reductase type 1 family. FAD serves as cofactor. As to expression, expressed in shoots and roots. More abundant in roots than RFNR1.

The protein resides in the plastid. It localises to the chloroplast. It carries out the reaction 2 reduced [2Fe-2S]-[ferredoxin] + NADP(+) + H(+) = 2 oxidized [2Fe-2S]-[ferredoxin] + NADPH. In terms of biological role, maintains the supply of reduced ferredoxin under non-photosynthetic conditions. This is Ferredoxin--NADP reductase, root isozyme 2, chloroplastic (RFNR2) from Arabidopsis thaliana (Mouse-ear cress).